The primary structure comprises 482 residues: MSAIDSQLPSSSGQDRPTDEVDRILSPGKLIILGLQHVLVMYAGAVAVPLMIGDRLGLSKEAIAMLISSDLFCCGIVTLLQCIGIGRFMGIRLPVIMSVTFAAVTPMIAIGMNPDIGLLGIFGATIAAGFITTLLAPLIGRLMPLFPPLVTGVVITSIGLSIIQVGIDWAAGGKGNPQYGNPVYLGISFAVLIFILLITRYAKGFMSNVAVLLGIVFGFLLSWMMNEVNLSGLHDASWFAIVTPMSFGMPIFDPVSILTMTAVLIIVFIESMGMFLALGEIVGRKLSSHDIIRGLRVDGVGTMIGGTFNSFPHTSFSQNVGLVSVTRVHSRWVCISSGIILILFGMVPKMAVLVASIPQFVLGGAGLVMFGMVLATGIRILSRCNYTTNRYNLYIVAISLGVGMTPTLSHDFFSKLPAVLQPLLHSGIMLATLSAVVLNVFFNGYQHHADLVKESVSDKDLKVRTVRMWLLMRKLKKNEHGE.

Topologically, residues 1 to 29 (MSAIDSQLPSSSGQDRPTDEVDRILSPGK) are cytoplasmic. Residues 30 to 50 (LIILGLQHVLVMYAGAVAVPL) traverse the membrane as a helical segment. The Periplasmic segment spans residues 51–62 (MIGDRLGLSKEA). A helical membrane pass occupies residues 63-83 (IAMLISSDLFCCGIVTLLQCI). Residues 84 to 92 (GIGRFMGIR) are Cytoplasmic-facing. A helical membrane pass occupies residues 93–113 (LPVIMSVTFAAVTPMIAIGMN). Topologically, residues 114-115 (PD) are periplasmic. Residues 116 to 136 (IGLLGIFGATIAAGFITTLLA) form a helical membrane-spanning segment. Over 137–142 (PLIGRL) the chain is Cytoplasmic. Residues 143 to 163 (MPLFPPLVTGVVITSIGLSII) form a helical membrane-spanning segment. The Periplasmic portion of the chain corresponds to 164-178 (QVGIDWAAGGKGNPQ). A helical transmembrane segment spans residues 179-199 (YGNPVYLGISFAVLIFILLIT). The Cytoplasmic segment spans residues 200 to 204 (RYAKG). A helical transmembrane segment spans residues 205–225 (FMSNVAVLLGIVFGFLLSWMM). The Periplasmic portion of the chain corresponds to 226-261 (NEVNLSGLHDASWFAIVTPMSFGMPIFDPVSILTMT). A helical transmembrane segment spans residues 262-282 (AVLIIVFIESMGMFLALGEIV). Over 283 to 337 (GRKLSSHDIIRGLRVDGVGTMIGGTFNSFPHTSFSQNVGLVSVTRVHSRWVCISS) the chain is Cytoplasmic. Residues 338–358 (GIILILFGMVPKMAVLVASIP) form a helical membrane-spanning segment. Position 359 (glutamine 359) is a topological domain, periplasmic. Residues 360-380 (FVLGGAGLVMFGMVLATGIRI) traverse the membrane as a helical segment. Residues 381 to 392 (LSRCNYTTNRYN) lie on the Cytoplasmic side of the membrane. A helical membrane pass occupies residues 393 to 413 (LYIVAISLGVGMTPTLSHDFF). At 414-421 (SKLPAVLQ) the chain is on the periplasmic side. Residues 422-442 (PLLHSGIMLATLSAVVLNVFF) form a helical membrane-spanning segment. At 443–482 (NGYQHHADLVKESVSDKDLKVRTVRMWLLMRKLKKNEHGE) the chain is on the cytoplasmic side.

The protein belongs to the nucleobase:cation symporter-2 (NCS2) (TC 2.A.40) family.

The protein resides in the cell inner membrane. Inhibited in the presence of the protonophore carbonyl cyanide m-chlorophenyl hydrazone. Functionally, proton-dependent high-capacity transporter for uric acid. Also shows a low capacity for transport of xanthine at 37 degrees Celsius but not at 25 degrees Celsius. The protein is Uric acid transporter UacT (uacT) of Escherichia coli (strain K12).